The chain runs to 974 residues: Localization factor PodJL (974 aa).

Coiled coils occupy residues 81-163, 218-320, and 375-469; these read DEVG…EAAG, VARL…SAQA, and QAQA…LEAA. Disordered stretches follow at residues 460-497 and 589-611; these read SEAQ…SPFE and AAAR…KKEK. Over residues 589-598 the composition is skewed to low complexity; the sequence is AAARAAAASE. The chain crosses the membrane as a helical span at residues 642–662; sequence ALVVFAAAGALGAGVGGLLLL. Sel1-like repeat units lie at residues 757–793, 794–829, and 830–865; these read PAAQ…NGGD, PRAM…DMGL, and VDSQ…RAGD.

In terms of processing, two isoforms exist, the full-length translation product PodJL and a C-terminal truncated form PodJS. Both appear during a specific time period of the cell cycle to control different aspects of polar organelle development.

Its subcellular location is the membrane. In terms of biological role, podJL provides the positional information for the localization of several polar organelles (pili, adhesive holdfast and chemotactic apparatus) by recruiting structural (CpaE) and regulatory (PleC) proteins to a specific cell pole. This Caulobacter vibrioides (strain ATCC 19089 / CIP 103742 / CB 15) (Caulobacter crescentus) protein is Localization factor PodJL (podJ).